A 398-amino-acid polypeptide reads, in one-letter code: CCA-adding enzyme (398 aa).

ATP is bound by residues Gly32 and Arg35. Residues Gly32 and Arg35 each coordinate CTP. Asp45 and Asp47 together coordinate Mg(2+). Residues Arg116, Asp159, Arg162, Arg165, and Arg168 each coordinate ATP. Arg116, Asp159, Arg162, Arg165, and Arg168 together coordinate CTP.

It belongs to the tRNA nucleotidyltransferase/poly(A) polymerase family. Bacterial CCA-adding enzyme type 3 subfamily. As to quaternary structure, homodimer. The cofactor is Mg(2+).

The enzyme catalyses a tRNA precursor + 2 CTP + ATP = a tRNA with a 3' CCA end + 3 diphosphate. The catalysed reaction is a tRNA with a 3' CCA end + 2 CTP + ATP = a tRNA with a 3' CCACCA end + 3 diphosphate. Its function is as follows. Catalyzes the addition and repair of the essential 3'-terminal CCA sequence in tRNAs without using a nucleic acid template. Adds these three nucleotides in the order of C, C, and A to the tRNA nucleotide-73, using CTP and ATP as substrates and producing inorganic pyrophosphate. tRNA 3'-terminal CCA addition is required both for tRNA processing and repair. Also involved in tRNA surveillance by mediating tandem CCA addition to generate a CCACCA at the 3' terminus of unstable tRNAs. While stable tRNAs receive only 3'-terminal CCA, unstable tRNAs are marked with CCACCA and rapidly degraded. In Lactobacillus johnsonii (strain CNCM I-12250 / La1 / NCC 533), this protein is CCA-adding enzyme.